The primary structure comprises 521 residues: uncharacterized protein (521 aa).

Residues 1-25 are disordered; the sequence is MLQRSLGVNGRKLAMSARSAKRERK. 6 consecutive transmembrane segments (helical) span residues 68 to 88, 114 to 134, 160 to 180, 192 to 212, 290 to 310, and 399 to 419; these read GAVW…GAVL, VLIV…SLTV, VVLA…HTVG, VAVT…IYFL, ALLV…GWCW, and LLFW…CAQI.

The protein localises to the cell membrane. This is an uncharacterized protein from Mycobacterium tuberculosis (strain CDC 1551 / Oshkosh).